The following is a 228-amino-acid chain: 7-cyano-7-deazaguanine synthase (228 aa).

Residue 11-21 coordinates ATP; it reads LSGGLDSATCL. Zn(2+)-binding residues include Cys-191, Cys-201, Cys-204, and Cys-207.

This sequence belongs to the QueC family. The cofactor is Zn(2+).

The enzyme catalyses 7-carboxy-7-deazaguanine + NH4(+) + ATP = 7-cyano-7-deazaguanine + ADP + phosphate + H2O + H(+). It functions in the pathway purine metabolism; 7-cyano-7-deazaguanine biosynthesis. Its function is as follows. Catalyzes the ATP-dependent conversion of 7-carboxy-7-deazaguanine (CDG) to 7-cyano-7-deazaguanine (preQ(0)). This is 7-cyano-7-deazaguanine synthase from Azoarcus sp. (strain BH72).